The chain runs to 251 residues: HTH-type transcriptional regulator UlaR (251 aa).

Residues 3–58 form the HTH deoR-type domain; that stretch reads EAQRHQILLEMLAQLGFVTVEKVVERLGISPATARRDINKLDESGKLKKVRNGAEA. Positions 20–39 form a DNA-binding region, H-T-H motif; sequence VTVEKVVERLGISPATARRD.

It is found in the cytoplasm. Functionally, represses ulaG and the ulaABCDEF operon. The sequence is that of HTH-type transcriptional regulator UlaR from Escherichia coli O127:H6 (strain E2348/69 / EPEC).